We begin with the raw amino-acid sequence, 361 residues long: Phosphoserine aminotransferase (361 aa).

R42 is a binding site for L-glutamate. Residues 76-77 (AT), W102, T152, D172, and Q195 each bind pyridoxal 5'-phosphate. K196 carries the post-translational modification N6-(pyridoxal phosphate)lysine. 237–238 (NT) contributes to the pyridoxal 5'-phosphate binding site.

It belongs to the class-V pyridoxal-phosphate-dependent aminotransferase family. SerC subfamily. As to quaternary structure, homodimer. Requires pyridoxal 5'-phosphate as cofactor.

It is found in the cytoplasm. It carries out the reaction O-phospho-L-serine + 2-oxoglutarate = 3-phosphooxypyruvate + L-glutamate. It catalyses the reaction 4-(phosphooxy)-L-threonine + 2-oxoglutarate = (R)-3-hydroxy-2-oxo-4-phosphooxybutanoate + L-glutamate. It participates in amino-acid biosynthesis; L-serine biosynthesis; L-serine from 3-phospho-D-glycerate: step 2/3. The protein operates within cofactor biosynthesis; pyridoxine 5'-phosphate biosynthesis; pyridoxine 5'-phosphate from D-erythrose 4-phosphate: step 3/5. Its function is as follows. Catalyzes the reversible conversion of 3-phosphohydroxypyruvate to phosphoserine and of 3-hydroxy-2-oxo-4-phosphonooxybutanoate to phosphohydroxythreonine. The polypeptide is Phosphoserine aminotransferase (Stenotrophomonas maltophilia (strain R551-3)).